Here is a 307-residue protein sequence, read N- to C-terminus: MAKQMEKKSARLLAFLLALIMIGSVFAYMLSGGSAEHREVVYRLDDFREYVNWTPADPVYVQYYNLSYTSKLGSKDPLASMVTTDLQKLLIPAIFSRQVLEVTRGISQVMIVDFGETVPLYFVDAGMSKIYFAKEDEIKHGNFTLQVRRPGIALVSELSPLVVGYKPLVEKAVDTVEGNYPSFGNKTYSYLSRINGSFAYAFFAYGDVVKQWIRVGNESPADFFFEGYRYNFNNSSYEKVWAMHFEGNYFFGGMNESEKNFEYYKVQNFGDGLSVAVMEDKNFTKVVNARPNILTWQISFNNTQNES.

A helical membrane pass occupies residues 12–34; sequence LLAFLLALIMIGSVFAYMLSGGS.

Its subcellular location is the membrane. This is an uncharacterized protein from Archaeoglobus fulgidus (strain ATCC 49558 / DSM 4304 / JCM 9628 / NBRC 100126 / VC-16).